Here is a 299-residue protein sequence, read N- to C-terminus: ATP phosphoribosyltransferase (299 aa).

This sequence belongs to the ATP phosphoribosyltransferase family. Long subfamily. Equilibrium between an active dimeric form, an inactive hexameric form and higher aggregates. Interconversion between the various forms is largely reversible and is influenced by the natural substrates and inhibitors of the enzyme. Requires Mg(2+) as cofactor.

Its subcellular location is the cytoplasm. The catalysed reaction is 1-(5-phospho-beta-D-ribosyl)-ATP + diphosphate = 5-phospho-alpha-D-ribose 1-diphosphate + ATP. It participates in amino-acid biosynthesis; L-histidine biosynthesis; L-histidine from 5-phospho-alpha-D-ribose 1-diphosphate: step 1/9. Its activity is regulated as follows. Feedback inhibited by histidine. Its function is as follows. Catalyzes the condensation of ATP and 5-phosphoribose 1-diphosphate to form N'-(5'-phosphoribosyl)-ATP (PR-ATP). Has a crucial role in the pathway because the rate of histidine biosynthesis seems to be controlled primarily by regulation of HisG enzymatic activity. The protein is ATP phosphoribosyltransferase of Escherichia coli O8 (strain IAI1).